Here is a 670-residue protein sequence, read N- to C-terminus: Probable metal-nicotianamine transporter YSL4 (670 aa).

Transmembrane regions (helical) follow at residues 35–55, 59–79, 107–127, 151–171, 273–293, 318–338, 389–409, 416–436, 450–470, 507–527, 559–579, 601–621, and 636–656; these read ITIR…IITH, LTIG…FFFI, CVVS…LIAM, GLWW…FCLV, LVNC…WPFI, VFIA…KIIV, FAVS…PLIF, FVLC…YGAG, GLFI…GLAA, LGTA…WTAF, PKHC…VNLI, FYIG…MLVW, and VASG…ILSI.

The protein belongs to the YSL (TC 2.A.67.2) family.

The protein resides in the membrane. May be involved in the transport of nicotianamine-chelated metals. This chain is Probable metal-nicotianamine transporter YSL4 (YSL4), found in Arabidopsis thaliana (Mouse-ear cress).